A 178-amino-acid chain; its full sequence is Large ribosomal subunit protein uL6 (178 aa).

Belongs to the universal ribosomal protein uL6 family. Part of the 50S ribosomal subunit.

This protein binds to the 23S rRNA, and is important in its secondary structure. It is located near the subunit interface in the base of the L7/L12 stalk, and near the tRNA binding site of the peptidyltransferase center. This is Large ribosomal subunit protein uL6 from Francisella tularensis subsp. novicida (strain U112).